The following is a 421-amino-acid chain: 4-hydroxy-3-methylbut-2-en-1-yl diphosphate synthase (flavodoxin) (421 aa).

Residues Cys311, Cys314, Cys357, and Glu364 each coordinate [4Fe-4S] cluster.

It belongs to the IspG family. It depends on [4Fe-4S] cluster as a cofactor.

It catalyses the reaction (2E)-4-hydroxy-3-methylbut-2-enyl diphosphate + oxidized [flavodoxin] + H2O + 2 H(+) = 2-C-methyl-D-erythritol 2,4-cyclic diphosphate + reduced [flavodoxin]. It functions in the pathway isoprenoid biosynthesis; isopentenyl diphosphate biosynthesis via DXP pathway; isopentenyl diphosphate from 1-deoxy-D-xylulose 5-phosphate: step 5/6. Converts 2C-methyl-D-erythritol 2,4-cyclodiphosphate (ME-2,4cPP) into 1-hydroxy-2-methyl-2-(E)-butenyl 4-diphosphate. The polypeptide is 4-hydroxy-3-methylbut-2-en-1-yl diphosphate synthase (flavodoxin) (Xanthomonas oryzae pv. oryzae (strain KACC10331 / KXO85)).